We begin with the raw amino-acid sequence, 361 residues long: Chorismate synthase (361 aa).

R48 is an NADP(+) binding site. FMN contacts are provided by residues 125-127 (RSS), 238-239 (NA), G278, 293-297 (KPTSS), and R319.

It belongs to the chorismate synthase family. In terms of assembly, homotetramer. FMNH2 is required as a cofactor.

The enzyme catalyses 5-O-(1-carboxyvinyl)-3-phosphoshikimate = chorismate + phosphate. Its pathway is metabolic intermediate biosynthesis; chorismate biosynthesis; chorismate from D-erythrose 4-phosphate and phosphoenolpyruvate: step 7/7. Functionally, catalyzes the anti-1,4-elimination of the C-3 phosphate and the C-6 proR hydrogen from 5-enolpyruvylshikimate-3-phosphate (EPSP) to yield chorismate, which is the branch point compound that serves as the starting substrate for the three terminal pathways of aromatic amino acid biosynthesis. This reaction introduces a second double bond into the aromatic ring system. In Aliivibrio fischeri (strain ATCC 700601 / ES114) (Vibrio fischeri), this protein is Chorismate synthase.